A 102-amino-acid polypeptide reads, in one-letter code: ATP-dependent Clp protease adapter protein ClpS (102 aa).

The protein belongs to the ClpS family. Binds to the N-terminal domain of the chaperone ClpA.

Functionally, involved in the modulation of the specificity of the ClpAP-mediated ATP-dependent protein degradation. The polypeptide is ATP-dependent Clp protease adapter protein ClpS (Shewanella frigidimarina (strain NCIMB 400)).